Consider the following 270-residue polypeptide: Regulatory protein RecX (270 aa).

Belongs to the RecX family.

It is found in the cytoplasm. Modulates RecA activity. The polypeptide is Regulatory protein RecX (Bacillus cereus (strain ZK / E33L)).